A 416-amino-acid chain; its full sequence is Succinate--CoA ligase [ADP-forming] subunit beta (416 aa).

Residues 1-14 (MLRMAPKTVGAVRN) constitute a hydrogenosome transit peptide. ATP is bound by residues lysine 64, 71–73 (GRG), and glutamate 132. Mg(2+)-binding residues include asparagine 224 and aspartate 242. Substrate contacts are provided by residues asparagine 293 and 350 to 352 (GIM).

Belongs to the succinate/malate CoA ligase beta subunit family. Heterodimer of an alpha and a beta subunit. Requires Mg(2+) as cofactor.

Its subcellular location is the hydrogenosome. The catalysed reaction is succinate + ATP + CoA = succinyl-CoA + ADP + phosphate. The protein operates within carbohydrate metabolism; tricarboxylic acid cycle; succinate from succinyl-CoA (ligase route): step 1/1. Functionally, succinyl-CoA synthetase functions in the citric acid cycle (TCA), coupling the hydrolysis of succinyl-CoA to the synthesis of ATP and thus represents the only step of substrate-level phosphorylation in the TCA. The beta subunit provides nucleotide specificity of the enzyme and binds the substrate succinate, while the binding sites for coenzyme A and phosphate are found in the alpha subunit. This is Succinate--CoA ligase [ADP-forming] subunit beta (SCSb) from Blastocystis sp. subtype 1 (strain ATCC 50177 / NandII).